Reading from the N-terminus, the 269-residue chain is Hydroxyethylthiazole kinase (269 aa).

Residue methionine 42 coordinates substrate. Arginine 118 and serine 164 together coordinate ATP. Glycine 191 contacts substrate.

It belongs to the Thz kinase family. Mg(2+) is required as a cofactor.

It carries out the reaction 5-(2-hydroxyethyl)-4-methylthiazole + ATP = 4-methyl-5-(2-phosphooxyethyl)-thiazole + ADP + H(+). The protein operates within cofactor biosynthesis; thiamine diphosphate biosynthesis; 4-methyl-5-(2-phosphoethyl)-thiazole from 5-(2-hydroxyethyl)-4-methylthiazole: step 1/1. Functionally, catalyzes the phosphorylation of the hydroxyl group of 4-methyl-5-beta-hydroxyethylthiazole (THZ). This is Hydroxyethylthiazole kinase from Listeria monocytogenes serovar 1/2a (strain ATCC BAA-679 / EGD-e).